The sequence spans 486 residues: NADH-quinone oxidoreductase subunit N 1 (486 aa).

The next 14 helical transmembrane spans lie at 15–35 (FLPE…DPVI), 46–66 (ISLI…GIAG), 72–92 (MLMV…VGIL), 111–128 (YHAL…MAAS), 131–151 (LIMV…LAGY), 166–186 (FLLG…IYGL), 208–228 (FVGI…SAAP), 241–261 (PTPV…AIFL), 276–296 (QPLV…AAIL), 303–323 (MLAY…TAHS), 331–351 (MFYL…VSVL), 375–395 (AAMF…GGFF), 410–432 (IWLT…RILV), and 455–475 (FALI…GWVL).

It belongs to the complex I subunit 2 family. NDH-1 is composed of 14 different subunits. Subunits NuoA, H, J, K, L, M, N constitute the membrane sector of the complex.

The protein resides in the cell inner membrane. The catalysed reaction is a quinone + NADH + 5 H(+)(in) = a quinol + NAD(+) + 4 H(+)(out). NDH-1 shuttles electrons from NADH, via FMN and iron-sulfur (Fe-S) centers, to quinones in the respiratory chain. The immediate electron acceptor for the enzyme in this species is believed to be ubiquinone. Couples the redox reaction to proton translocation (for every two electrons transferred, four hydrogen ions are translocated across the cytoplasmic membrane), and thus conserves the redox energy in a proton gradient. The sequence is that of NADH-quinone oxidoreductase subunit N 1 from Solibacter usitatus (strain Ellin6076).